A 166-amino-acid chain; its full sequence is Bacterial non-heme ferritin (166 aa).

The Ferritin-like diiron domain occupies 2 to 145; sequence LSKNLLEALN…THINYLTRIG (144 aa). Positions 17, 50, 53, 94, and 127 each coordinate Fe cation.

The protein belongs to the ferritin family. Prokaryotic subfamily.

The protein resides in the cytoplasm. The catalysed reaction is 4 Fe(2+) + O2 + 6 H2O = 4 iron(III) oxide-hydroxide + 12 H(+). Iron-storage protein. In Staphylococcus aureus (strain MRSA252), this protein is Bacterial non-heme ferritin (ftnA).